The chain runs to 283 residues: Pantothenate synthetase (283 aa).

30–37 is an ATP binding site; sequence MGNLHSGH. His-37 (proton donor) is an active-site residue. (R)-pantoate is bound at residue Gln-61. Gln-61 contacts beta-alanine. 149 to 152 contacts ATP; sequence GQKD. Gln-155 is a (R)-pantoate binding site. ATP is bound by residues Val-178 and 186–189; that span reads LSSR.

Belongs to the pantothenate synthetase family. Homodimer.

The protein localises to the cytoplasm. It carries out the reaction (R)-pantoate + beta-alanine + ATP = (R)-pantothenate + AMP + diphosphate + H(+). It participates in cofactor biosynthesis; (R)-pantothenate biosynthesis; (R)-pantothenate from (R)-pantoate and beta-alanine: step 1/1. In terms of biological role, catalyzes the condensation of pantoate with beta-alanine in an ATP-dependent reaction via a pantoyl-adenylate intermediate. The sequence is that of Pantothenate synthetase from Pseudomonas fluorescens (strain SBW25).